The chain runs to 329 residues: Stimulator of interferon genes protein (329 aa).

Residues 1 to 4 (MACV) are Cytoplasmic-facing. Residues 5–25 (LAIGSILFVWILGKGKYSGAQ) traverse the membrane as a helical segment. Leu26 is a topological domain (lumenal). The helical transmembrane segment at 27-52 (IYRMATNFAISQGCCLVTCACELTEE) threads the bilayer. At 53–74 (IKHLHTRYNGHYWRALKASFNL) the chain is on the cytoplasmic side. A helical transmembrane segment spans residues 75 to 88 (SCAAFVTAILCYVF). Residues 89–98 (YEPKLMASLP) lie on the Lumenal side of the membrane. A helical transmembrane segment spans residues 99 to 116 (LTIDITLTLLSWLFCWIL). The Cytoplasmic segment spans residues 117–329 (GIQGPTPATI…QQHSEEYSML (213 aa)). A cyclic dinucleotide-binding domain (CBD) region spans residues 135–325 (LNVAHGLAWS…KHIRQQHSEE (191 aa)). The 2',3'-cGAMP site is built by Ser144, Tyr149, Arg220, and Thr245. Residues Ser144, Tyr149, 220–223 (RVFK), and Thr245 contribute to the 3',3'-c-di-GMP site.

It belongs to the STING family. Homodimer; forms a homodimer in absence of cyclic nucleotide (c-di-GMP or cGAMP). Homotetramer; in presence of cyclic nucleotide (c-di-GMP or cGAMP), forms tetramers and higher-order oligomers through side-by-side packing.

It is found in the endoplasmic reticulum membrane. The protein localises to the cytoplasm. It localises to the perinuclear region. The protein resides in the endoplasmic reticulum-Golgi intermediate compartment membrane. Its subcellular location is the golgi apparatus membrane. It is found in the cytoplasmic vesicle. The protein localises to the autophagosome membrane. The enzyme catalyses H(+)(in) = H(+)(out). In terms of biological role, sensor of cytosolic DNA from bacteria and viruses that promotes autophagy. Acts by recognizing and binding cyclic GMP-AMP (cGAMP), a messenger produced by CGAS in response to DNA in the cytosol. Exhibits guanine base-specific ligand recognition: binds 3'-3'linked cGAMP, 2'-3' linked cGAMP and 3'-3' linked c-di-GMP with much greater affinity as compared to 3'-3' linked c-di-AMP. Following cGAMP-binding, promotes the formation of autophagosomes, leading to target cytosolic DNA for degradation by the lysosome. Promotes autophagy by acting as a proton channel that directs proton efflux from the Golgi to facilitate LC3 lipidation. Lacks the C-terminal tail (CTT) found in other vertebrate orthologs which is essential for interferon signaling. The sequence is that of Stimulator of interferon genes protein from Xenopus tropicalis (Western clawed frog).